The following is a 314-amino-acid chain: Ribosomal RNA large subunit methyltransferase F (314 aa).

The protein belongs to the methyltransferase superfamily. METTL16/RlmF family.

Its subcellular location is the cytoplasm. It carries out the reaction adenosine(1618) in 23S rRNA + S-adenosyl-L-methionine = N(6)-methyladenosine(1618) in 23S rRNA + S-adenosyl-L-homocysteine + H(+). Specifically methylates the adenine in position 1618 of 23S rRNA. The polypeptide is Ribosomal RNA large subunit methyltransferase F (Flavobacterium psychrophilum (strain ATCC 49511 / DSM 21280 / CIP 103535 / JIP02/86)).